The chain runs to 318 residues: MLQHTSLVLLLASIWTTRHPVQGADLVQDLSISTCRIMGVALVGRNKNPQMNFTEANEACKMLGLTLASRDQVESAQKSGFETCSYGWVGEQFSVIPRIFSNPRCGKNGKGVLIWNAPSSQKFKAYCHNSSDTWVNSCIPEIVTTFYPVLDTQTPATEFSVSSSAYLASSPDSTTPVSATTRAPPLTSMARKTKKICITEVYTEPITMATETEAFVASGAAFKNEAAGFGGVPTALLVLALLFFGAAAVLAVCYVKRYVKAFPFTTKNQQKEMIETKVVKEEKADDVNANEESKKTIKNPEEAKSPPKTTVRCLEAEV.

An N-terminal signal peptide occupies residues 1-23 (MLQHTSLVLLLASIWTTRHPVQG). Residues 24-234 (ADLVQDLSIS…EAAGFGGVPT (211 aa)) are Extracellular-facing. A Link domain is found at 39–129 (GVALVGRNKN…SQKFKAYCHN (91 aa)). Asn-52 carries N-linked (GlcNAc...) asparagine glycosylation. 2 disulfide bridges follow: Cys-60–Cys-127 and Cys-84–Cys-105. A glycan (N-linked (GlcNAc...) asparagine) is linked at Asn-129. Residues 235 to 255 (ALLVLALLFFGAAAVLAVCYV) traverse the membrane as a helical segment. Residues 256-318 (KRYVKAFPFT…TTVRCLEAEV (63 aa)) are Cytoplasmic-facing. Residues 284-305 (ADDVNANEESKKTIKNPEEAKS) are compositionally biased toward basic and acidic residues. The disordered stretch occupies residues 284-318 (ADDVNANEESKKTIKNPEEAKSPPKTTVRCLEAEV).

In terms of assembly, homodimer; disulfide-linked. Interacts with PDGFB and IGFBP3. Forms a transient ternary complex with PDGFB and PDGFRB in TGN. Post-translationally, O-glycosylated.

It localises to the membrane. In terms of biological role, ligand-specific transporter trafficking between intracellular organelles (TGN) and the plasma membrane. Plays a role in autocrine regulation of cell growth mediated by growth regulators containing cell surface retention sequence binding (CRS). May act as a hyaluronan (HA) transporter, either mediating its uptake for catabolism within lymphatic endothelial cells themselves, or its transport into the lumen of afferent lymphatic vessels for subsequent re-uptake and degradation in lymph nodes. Binds to pericelluar hyaluronan matrices deposited on the surface of leukocytes and facilitates cell adhesion and migration through lymphatic endothelium. This is Lymphatic vessel endothelial hyaluronic acid receptor 1 (Lyve1) from Mus musculus (Mouse).